Reading from the N-terminus, the 539-residue chain is Polyol transporter 5 (539 aa).

Polar residues predominate over residues 1-11 (MTGATPENRTA). The tract at residues 1 to 24 (MTGATPENRTAPSPPPVKHVPESV) is disordered. 12 helical membrane-spanning segments follow: residues 37–57 (FACA…IGVM), 73–93 (LQIG…SCAA), 104–124 (YTIV…GLSP), 127–147 (AFLM…LMIA), 165–185 (SFPE…NLAF), 196–216 (LMLG…LAMP), 296–316 (IAAI…VVLF), 333–353 (LLAT…ATFL), 364–384 (LTSV…LTII), 391–411 (VMWA…TFSI), 433–453 (GSSM…ISFL), and 463–483 (GAFY…YTFL). Composition is skewed to basic and acidic residues over residues 503 to 514 (WRDSKSKPKGNP) and 530 to 539 (QWKEGDTQSS). The disordered stretch occupies residues 503–539 (WRDSKSKPKGNPEKTVPNPEVEIGSNKQWKEGDTQSS).

Belongs to the major facilitator superfamily. Sugar transporter (TC 2.A.1.1) family. In terms of tissue distribution, highly expressed in roots. Expressed in vascular tissue of leaves, sepals and siliques.

It localises to the cell membrane. Functionally, plasma membrane broad-spectrum sugar-proton symporter. Mediates the uptake of linear polyols such as sorbitol, xylitol, erythritol or glycerol. Can transport the cyclic polyol myo-inositol and different hexoses, pentoses (including ribose), tetroses and sugar alcohols. The sequence is that of Polyol transporter 5 (PLT5) from Arabidopsis thaliana (Mouse-ear cress).